The chain runs to 600 residues: MHGTATNPYRTHTAGELRASNVGQRVRLAGWVHRRRDHGGLIFVDLRDRWGITQVTFDPERGEVFSAAERLRPEWSVSVEGEVVRRPEGNENPELPTGEIEVEASSLRVLNASETPPFEIDRERPVDELTRLRYRYLDLRRERMRENILFRDRVVRYIRRYLAERDFVEVETPLLTKSTPEGARDYLVPSRLYPGQFYALPQSPQQFKQLLMVAGLERYFQIARALRDEDQRGDRQPEHTQLDLEMSYTTQDEVLQLIEGLYTEIVERLTEKRVLFKPFPRLTYAEAMERFGSDKPDLRFGLELRDVSDLARSSEFKVFRNAVEAGGSVRGLAAGGLGDLSRRELDGLTEVAREGGARGLAHLRAEGKALKGPVAKFFSAEEQAALREALGARPGDWMFFVADRDPVVFESLNRLRLHLRDRLGLADRDALAFCWITDFPLFEYNEEEGRIEPMHHMFTMPREEDIPLLDTDPLAVTGQLYDLVANGVELASGSIRIHRPDLQQKVFSIIGIDEEEAERRFGTLLRAFRYGAPPHGGIAPGIDRLVMLLRDEPNIREVMAFPKTQAARDEMMDAPSPVSEEQLRELHISLCLPPEERRNP.

Glutamate 181 contacts L-aspartate. The tract at residues 205-208 is aspartate; it reads QQFK. Residue arginine 227 participates in L-aspartate binding. Residues 227-229 and glutamine 236 contribute to the ATP site; that span reads RDE. Residue histidine 455 participates in L-aspartate binding. Residue glutamate 489 participates in ATP binding. An L-aspartate-binding site is contributed by arginine 496. Position 541 to 544 (541 to 544) interacts with ATP; it reads GIDR.

The protein belongs to the class-II aminoacyl-tRNA synthetase family. Type 1 subfamily. Homodimer.

It localises to the cytoplasm. It catalyses the reaction tRNA(Asx) + L-aspartate + ATP = L-aspartyl-tRNA(Asx) + AMP + diphosphate. Aspartyl-tRNA synthetase with relaxed tRNA specificity since it is able to aspartylate not only its cognate tRNA(Asp) but also tRNA(Asn). Reaction proceeds in two steps: L-aspartate is first activated by ATP to form Asp-AMP and then transferred to the acceptor end of tRNA(Asp/Asn). The chain is Aspartate--tRNA(Asp/Asn) ligase from Rubrobacter xylanophilus (strain DSM 9941 / JCM 11954 / NBRC 16129 / PRD-1).